Reading from the N-terminus, the 334-residue chain is Non-functional pseudokinase ZED1 (334 aa).

The region spanning 49–334 (FSESRIISSW…KELKLIEKLS (286 aa)) is the Protein kinase domain. ATP contacts are provided by residues 55–63 (ISSWGYFIW) and K76. Residues T125 and T177 each carry the O-acetylthreonine modification.

Belongs to the protein kinase superfamily. Ser/Thr protein kinase family. ZRK subfamily. Interacts with RPP13L4/ZAR1. Component of an immune signaling complex made of, at least, SZE1, BKN2/SZE2, ZAR1 and ZED1. Binds directly to SZE1 at the plasma membrane. As to expression, expressed in seedlings, young leaves, floral organs, shoot apical meristems (SAM) and inflorescence stems.

Its subcellular location is the cytoplasm. The protein resides in the cytosol. It is found in the nucleus. The protein localises to the cell membrane. Functionally, together with RPP13L4/ZAR1, involved in the ambient temperature (above 22 degrees Celsius)-sensitive aerial organ development. Together with RPP13L4/ZAR1, involved in the regulation of the ambient temperature-sensitive intersection of growth and immune response in the absence of pathogens, by repressing the transcription of SNC1. Probable non-functional kinase required for recognition of the Pseudomonas syringae type III effector HopZ1a by RPP13L4/ZAR1 and, together with SZE1 and SZE2, to trigger subsequent defense responses. May function as a decoy to trap HopZ1a in the ZAR1 complex for recognition by the plant immune system. This is Non-functional pseudokinase ZED1 from Arabidopsis thaliana (Mouse-ear cress).